Here is a 296-residue protein sequence, read N- to C-terminus: Myozenin-1 (296 aa).

Residue Ser82 is modified to Phosphoserine. Gly residues-rich tracts occupy residues 105-117 and 134-170; these read FSYG…GQAG and SGFG…QAGG. A disordered region spans residues 105-172; the sequence is FSYGKGSSGG…GSGDQAGGDG (68 aa).

It belongs to the myozenin family. In terms of assembly, interacts with ACTN2, ACTN3, FLNA, FLNB, FLNC, LDB3, PPP3CA and TCAP. Interacts via its C-terminal region with MYOT. In terms of tissue distribution, expressed primarily in skeletal muscle and specifically enriched in the gastrocnemius, which is composed predominantly of fast-twitch muscle fibers. Detected at lower levels in heart.

The protein localises to the nucleus. It is found in the cell projection. Its subcellular location is the pseudopodium. Its function is as follows. Myozenins may serve as intracellular binding proteins involved in linking Z-disk proteins such as alpha-actinin, gamma-filamin, TCAP/telethonin, LDB3/ZASP and localizing calcineurin signaling to the sarcomere. Plays an important role in the modulation of calcineurin signaling. May play a role in myofibrillogenesis. The sequence is that of Myozenin-1 from Mus musculus (Mouse).